The primary structure comprises 595 residues: NADH-quinone oxidoreductase subunit C/D (595 aa).

Residues 1-185 (MNKNICLSAS…NPFVLTKEKE (185 aa)) form an NADH dehydrogenase I subunit C region. The segment at 209-595 (DFMFLNFGPN…IDFVMSDVDR (387 aa)) is NADH dehydrogenase I subunit D.

In the N-terminal section; belongs to the complex I 30 kDa subunit family. The protein in the C-terminal section; belongs to the complex I 49 kDa subunit family. In terms of assembly, NDH-1 is composed of 13 different subunits. Subunits NuoB, CD, E, F, and G constitute the peripheral sector of the complex.

The protein localises to the cell inner membrane. The enzyme catalyses a quinone + NADH + 5 H(+)(in) = a quinol + NAD(+) + 4 H(+)(out). In terms of biological role, NDH-1 shuttles electrons from NADH, via FMN and iron-sulfur (Fe-S) centers, to quinones in the respiratory chain. The immediate electron acceptor for the enzyme in this species is believed to be ubiquinone. Couples the redox reaction to proton translocation (for every two electrons transferred, four hydrogen ions are translocated across the cytoplasmic membrane), and thus conserves the redox energy in a proton gradient. The protein is NADH-quinone oxidoreductase subunit C/D of Baumannia cicadellinicola subsp. Homalodisca coagulata.